Here is a 548-residue protein sequence, read N- to C-terminus: MANQGGPSRKSLSFSGHSFQGRKKASENEGGGGGGSDLLPRRSLTSSRSSISLSGERSGERTVKRLRLCKALTVPDSTTLFEACRRMAARRVDALLLTDSNALLCGILTDRDIATKVIAKQLNLEETPVSKVMTKNPVFVLSDTIAVEALQKMVQGKFRHLPVVENGEVIALLDIAKCLYDAIARMERSVEKGKAIAAAVEGVEKNWGTSIAGPNTFMETLRERIFKPSLSTIIPENTKVLKVGLDETVLGVTMKMVEYQSSAAMVMVENKLVGILTSKDILMRVISQNLPQETTTVEKVMTPNPESATVDMAIVEALHIMHNGKFLHLPVLDKDGDVVAVIDVIHITHAAVTTAGSTAGINNETANSMMQKFWDSAMALSPNEDGDETRSEEESMKLSSEIEVTKSFSYPNTFAFKLQDKKGRMHRFMCETQSLTTLITAILQRMGDDIEPDNLPQIMYEDEDNDKVVLASDNDLGAAVEHAKSIGWKGLKLHLDYTEERGHRRGLSSEDMDYDQSNSWAAAYKTVAAGAALAAGLGVLVYLKRNSN.

The segment covering 1 to 18 has biased composition (polar residues); that stretch reads MANQGGPSRKSLSFSGHS. Residues 1 to 58 are disordered; it reads MANQGGPSRKSLSFSGHSFQGRKKASENEGGGGGGSDLLPRRSLTSSRSSISLSGERS. Phosphoserine is present on Ser-18. Over residues 37–56 the composition is skewed to low complexity; it reads DLLPRRSLTSSRSSISLSGE. 4 CBS domains span residues 63-126, 133-190, 233-293, and 301-358; these read VKRL…NLEE, MTKN…ERSV, IIPE…LPQE, and MTPN…AGST. The PB1 domain occupies 411–498; sequence PNTFAFKLQD…KGLKLHLDYT (88 aa). Residues 521-543 traverse the membrane as a helical segment; it reads AAAYKTVAAGAALAAGLGVLVYL.

It localises to the membrane. The chain is CBS domain-containing protein CBSCBSPB4 (CBSCBSPB4) from Arabidopsis thaliana (Mouse-ear cress).